A 73-amino-acid polypeptide reads, in one-letter code: Conotoxin Vc6.17 (73 aa).

Positions 1-19 (MQKLIILLLVAAVLMSTQA) are cleaved as a signal peptide. A propeptide spanning residues 20-44 (LFQEKRRKEKIDLLSKRKTDAEKQH) is cleaved from the precursor. Intrachain disulfides connect C48–C62, C55–C66, and C61–C71.

This sequence belongs to the conotoxin O2 superfamily. Expressed by the venom duct.

The protein localises to the secreted. Inhibits voltage-gated ion channels. This is Conotoxin Vc6.17 from Conus victoriae (Queen Victoria cone).